The following is a 418-amino-acid chain: Probable serine/threonine-protein kinase DDB_G0280461 (418 aa).

In terms of domain architecture, Protein kinase spans 14-271; that stretch reads KIEENEFSKG…IVQTLDQLAI (258 aa). ATP contacts are provided by residues 20–28 and Lys41; that span reads FSKGSFAKV. Catalysis depends on Asp139, which acts as the Proton acceptor. 2 disordered regions span residues 327–356 and 377–418; these read NNNNNNNNNNNNKNNINNNNNNNNNNNNNN and SVNS…CLIN. Residues 377–402 show a composition bias toward low complexity; it reads SVNSSFSNSSLGSNGSNSSGTSTSSG. Basic residues predominate over residues 403–418; the sequence is GKKRSQKRKSWKCLIN.

It belongs to the protein kinase superfamily. TKL Ser/Thr protein kinase family.

The enzyme catalyses L-seryl-[protein] + ATP = O-phospho-L-seryl-[protein] + ADP + H(+). The catalysed reaction is L-threonyl-[protein] + ATP = O-phospho-L-threonyl-[protein] + ADP + H(+). The chain is Probable serine/threonine-protein kinase DDB_G0280461 from Dictyostelium discoideum (Social amoeba).